The sequence spans 393 residues: NAD(P)H-quinone oxidoreductase subunit H, chloroplastic (393 aa).

The protein belongs to the complex I 49 kDa subunit family. In terms of assembly, NDH is composed of at least 16 different subunits, 5 of which are encoded in the nucleus.

It is found in the plastid. The protein localises to the chloroplast thylakoid membrane. The enzyme catalyses a plastoquinone + NADH + (n+1) H(+)(in) = a plastoquinol + NAD(+) + n H(+)(out). It catalyses the reaction a plastoquinone + NADPH + (n+1) H(+)(in) = a plastoquinol + NADP(+) + n H(+)(out). In terms of biological role, NDH shuttles electrons from NAD(P)H:plastoquinone, via FMN and iron-sulfur (Fe-S) centers, to quinones in the photosynthetic chain and possibly in a chloroplast respiratory chain. The immediate electron acceptor for the enzyme in this species is believed to be plastoquinone. Couples the redox reaction to proton translocation, and thus conserves the redox energy in a proton gradient. The polypeptide is NAD(P)H-quinone oxidoreductase subunit H, chloroplastic (Platanus occidentalis (Sycamore)).